Consider the following 113-residue polypeptide: Large ribosomal subunit protein uL22 (113 aa).

It belongs to the universal ribosomal protein uL22 family. Part of the 50S ribosomal subunit.

This protein binds specifically to 23S rRNA; its binding is stimulated by other ribosomal proteins, e.g. L4, L17, and L20. It is important during the early stages of 50S assembly. It makes multiple contacts with different domains of the 23S rRNA in the assembled 50S subunit and ribosome. Its function is as follows. The globular domain of the protein is located near the polypeptide exit tunnel on the outside of the subunit, while an extended beta-hairpin is found that lines the wall of the exit tunnel in the center of the 70S ribosome. The chain is Large ribosomal subunit protein uL22 from Geobacillus kaustophilus (strain HTA426).